We begin with the raw amino-acid sequence, 373 residues long: SH3 domain-binding protein 5-like (373 aa).

The interval 1–53 (MEGKEGPSCEVRLPTPGAEREGPIHPELGAFGETASNTIKLSESSNDGKKEEI) is disordered. The segment covering 34 to 45 (TASNTIKLSESS) has biased composition (polar residues). 2 coiled-coil regions span residues 55–98 (EELD…ESAR) and 170–272 (WQEM…SEEI). 2 disordered regions span residues 276–305 (RTQS…TGPP) and 344–373 (TGAV…SVSL). The span at 344–358 (TGAVECGGSRERGGD) shows a compositional bias: basic and acidic residues.

The protein belongs to the SH3BP5 family.

Its function is as follows. Functions as a guanine nucleotide exchange factor (GEF) for rab11a. In Xenopus tropicalis (Western clawed frog), this protein is SH3 domain-binding protein 5-like (sh3bp5l).